A 422-amino-acid polypeptide reads, in one-letter code: Serine--tRNA ligase (422 aa).

Position 229-231 (T229–E231) interacts with L-serine. R260–E262 is a binding site for ATP. L-serine is bound at residue E283. E347–S350 serves as a coordination point for ATP. Position 383 (S383) interacts with L-serine.

Belongs to the class-II aminoacyl-tRNA synthetase family. Type-1 seryl-tRNA synthetase subfamily. As to quaternary structure, homodimer. The tRNA molecule binds across the dimer.

The protein resides in the cytoplasm. The catalysed reaction is tRNA(Ser) + L-serine + ATP = L-seryl-tRNA(Ser) + AMP + diphosphate + H(+). It catalyses the reaction tRNA(Sec) + L-serine + ATP = L-seryl-tRNA(Sec) + AMP + diphosphate + H(+). It participates in aminoacyl-tRNA biosynthesis; selenocysteinyl-tRNA(Sec) biosynthesis; L-seryl-tRNA(Sec) from L-serine and tRNA(Sec): step 1/1. Its function is as follows. Catalyzes the attachment of serine to tRNA(Ser). Is also able to aminoacylate tRNA(Sec) with serine, to form the misacylated tRNA L-seryl-tRNA(Sec), which will be further converted into selenocysteinyl-tRNA(Sec). This Pelobacter propionicus (strain DSM 2379 / NBRC 103807 / OttBd1) protein is Serine--tRNA ligase.